Reading from the N-terminus, the 325-residue chain is MDLLTLLLEKKLADHLTFPETINAHWLAEGVLQLIPHEEGNRSLVISAGIHGNETAPIEILIQLLAQLAEGTLALKNNVLIIFGNLPAMRTNRRYLHDDLNRMFGGRYLNFPLGNERSRAAELENVVNRFFAEPSVSSTNIRWHIDLHTAIRASHHEQFALLPAQNRPFSAEFMQWLHDSDIDALVYHREKAGTFSHFLSEKFGADSCTMEMGKAMPFGENDLTRFQKITDALYGLISLSQITARIKFELKHYQVINSIIKSHDSFQLHIPADTLNFTELPEGFEIASQHDHHWKIKFPAKFILFPNAEVANGLRAGLLLALNKK.

Zn(2+)-binding residues include H51, E54, and H148. E211 is an active-site residue.

Belongs to the AspA/AstE family. Succinylglutamate desuccinylase subfamily. Requires Zn(2+) as cofactor.

It catalyses the reaction N-succinyl-L-glutamate + H2O = L-glutamate + succinate. It functions in the pathway amino-acid degradation; L-arginine degradation via AST pathway; L-glutamate and succinate from L-arginine: step 5/5. Functionally, transforms N(2)-succinylglutamate into succinate and glutamate. In Photorhabdus laumondii subsp. laumondii (strain DSM 15139 / CIP 105565 / TT01) (Photorhabdus luminescens subsp. laumondii), this protein is Succinylglutamate desuccinylase.